We begin with the raw amino-acid sequence, 445 residues long: Phosphoglucosamine mutase (445 aa).

The active-site Phosphoserine intermediate is Ser101. Residues Ser101, Asp240, Asp242, and Asp244 each contribute to the Mg(2+) site. Ser101 bears the Phosphoserine mark.

It belongs to the phosphohexose mutase family. Mg(2+) serves as cofactor. Activated by phosphorylation.

The catalysed reaction is alpha-D-glucosamine 1-phosphate = D-glucosamine 6-phosphate. Functionally, catalyzes the conversion of glucosamine-6-phosphate to glucosamine-1-phosphate. The protein is Phosphoglucosamine mutase of Pseudomonas aeruginosa (strain LESB58).